Consider the following 2104-residue polypeptide: Transmembrane matrix receptor MUP-4 (2104 aa).

An N-terminal signal peptide occupies residues Met1–Ala15. Over Ala16–Pro1860 the chain is Extracellular. 3 consecutive EGF-like domains span residues Val71–Asp110, Thr122–Ser163, and Ser175–Asn213. Cystine bridges form between Cys75-Cys89, Cys83-Cys98, Cys126-Cys142, Cys136-Cys151, Cys179-Cys192, and Cys186-Cys201. The 46-residue stretch at Arg220–Arg265 folds into the WR1 domain. EGF-like domains lie at Val278–Asp315, Val327–Ile360, and Ala377–Asn416. 7 disulfides stabilise this stretch: Cys282–Cys294, Cys288–Cys303, Cys331–Cys344, Cys338–Cys353, Cys355–Cys359, Cys381–Cys395, and Cys389–Cys404. The 176-residue stretch at Asp437–Ile612 folds into the VWFA domain. Residues Asn494 and Asn556 are each glycosylated (N-linked (GlcNAc...) asparagine). 2 EGF-like domains span residues Ser728 to Glu772 and Leu819 to Glu857. 21 cysteine pairs are disulfide-bonded: Cys732–Cys746, Cys740–Cys756, Cys758–Cys771, Cys823–Cys836, Cys830–Cys845, Cys873–Cys886, Cys880–Cys895, Cys923–Cys937, Cys931–Cys946, Cys972–Cys985, Cys979–Cys995, Cys1020–Cys1034, Cys1028–Cys1046, Cys1075–Cys1089, Cys1083–Cys1098, Cys1125–Cys1139, Cys1133–Cys1148, Cys1173–Cys1187, Cys1181–Cys1196, Cys1219–Cys1233, and Cys1227–Cys1242. The 39-residue stretch at Gln869–Asn907 folds into the EGF-like 9; calcium-binding domain. Asn879 carries N-linked (GlcNAc...) asparagine glycosylation. 7 consecutive EGF-like domains span residues Leu919–Leu958, Leu968–Leu1007, Val1016–Val1058, Leu1071–Val1110, Leu1121–Glu1160, Ile1169–Ser1208, and Arg1215–Asp1254. Residue Asn1037 is glycosylated (N-linked (GlcNAc...) asparagine). N-linked (GlcNAc...) asparagine glycosylation occurs at Asn1132. 3 N-linked (GlcNAc...) asparagine glycosylation sites follow: Asn1271, Asn1403, and Asn1576. SEA domains lie at Pro1322–Asp1444 and Ala1495–Leu1620. EGF-like domains lie at Pro1622–Ser1658, Gly1669–Ser1705, and Ser1717–Ser1754. 11 disulfide bridges follow: Cys1626–Cys1637, Cys1631–Cys1646, Cys1673–Cys1687, Cys1681–Cys1696, Cys1721–Cys1733, Cys1727–Cys1742, Cys1776–Cys1789, Cys1783–Cys1798, Cys1821–Cys1830, Cys1824–Cys1841, and Cys1843–Cys1852. Asn1730 and Asn1782 each carry an N-linked (GlcNAc...) asparagine glycan. The region spanning Asp1772 to Ser1810 is the EGF-like 20; calcium-binding domain. In terms of domain architecture, EGF-like 21 spans Ala1817–Glu1853. A glycan (N-linked (GlcNAc...) asparagine) is linked at Asn1838. Residues Leu1861–Tyr1881 form a helical membrane-spanning segment. Residues Met1882 to Phe2104 lie on the Cytoplasmic side of the membrane. The span at Ser2031–Gly2040 shows a compositional bias: low complexity. The tract at residues Ser2031–Phe2104 is disordered. Composition is skewed to basic and acidic residues over residues Val2062–Glu2076 and Thr2083–Phe2104.

As to expression, abundant at hypodermal cell-matrix junctions overlying muscle of threefold embryos. Expression continues in body wall muscle in larvae and adults and is also detected in other regions where cells show mechanical attachment to the hypodermis including the inner surface of the pharynx, overlying anal and intestinal muscles, overlying vulval and uterine sex muscles, male tail muscle attachment zones and the six mechanosensory neurons (at protein level).

Its subcellular location is the cell junction. It localises to the hemidesmosome. The protein resides in the cytoplasm. The protein localises to the cytoskeleton. It is found in the cell membrane. Required for junctional attachments between hypodermis and muscle, and between the apical epithelial surface and the cuticular matrix. Essential for enclosure of the embryo by the hypodermis, hypodermal integrity, embryo elongation, and maintenance of hypodermal morphology in fully elongated embryos. This chain is Transmembrane matrix receptor MUP-4, found in Caenorhabditis elegans.